The primary structure comprises 446 residues: Histidinol dehydrogenase homolog (446 aa).

H266 contributes to the Zn(2+) binding site. Active-site proton acceptor residues include E334 and H335. H427 provides a ligand contact to Zn(2+).

It belongs to the histidinol dehydrogenase family. Requires Zn(2+) as cofactor.

In Colwellia psychrerythraea (strain 34H / ATCC BAA-681) (Vibrio psychroerythus), this protein is Histidinol dehydrogenase homolog.